Here is a 312-residue protein sequence, read N- to C-terminus: MNFQSVISLLHHFWGTRGCLIAQPYDIEKGAGTKNPQTFLRALGPEPWAVAYVEPCRRPTDGRYGENPNRFQHYYQYQVLIKPSPDNIQEIYLDSLRALGIRPEDHDIRFVEDNWEDATVGAWGTGWEVWLDGMEITQFTYFQQCGGIDCRPVSIEITYGLERLTMYLQQVEAITKIHWTDNITYGDVFLQNEIEQSTYNFEASNPELLLTLFSLYEQEATQLTKKGLVLPSLDYVMKCSHTFNLLDARGVISVTERTRYIARIRHLARKVAHLYVEQREKLGFPLLKDLKPAIPVGQVEVAATQTKSASAG.

This sequence belongs to the class-II aminoacyl-tRNA synthetase family. In terms of assembly, tetramer of two alpha and two beta subunits.

The protein localises to the cytoplasm. The catalysed reaction is tRNA(Gly) + glycine + ATP = glycyl-tRNA(Gly) + AMP + diphosphate. The polypeptide is Glycine--tRNA ligase alpha subunit (Nostoc punctiforme (strain ATCC 29133 / PCC 73102)).